The following is a 59-amino-acid chain: Cecropin-C type 1 (59 aa).

Positions 1–23 (MNFTKIFVLIAMAALLLVGQSEA) are cleaved as a signal peptide.

It is found in the secreted. Functionally, cecropins have lytic and antibacterial activity against several Gram-positive and Gram-negative bacteria. This Aedes albopictus (Asian tiger mosquito) protein is Cecropin-C type 1 (CECC1).